The sequence spans 571 residues: Proline--tRNA ligase (571 aa).

This sequence belongs to the class-II aminoacyl-tRNA synthetase family. ProS type 1 subfamily. As to quaternary structure, homodimer.

It is found in the cytoplasm. The enzyme catalyses tRNA(Pro) + L-proline + ATP = L-prolyl-tRNA(Pro) + AMP + diphosphate. Its function is as follows. Catalyzes the attachment of proline to tRNA(Pro) in a two-step reaction: proline is first activated by ATP to form Pro-AMP and then transferred to the acceptor end of tRNA(Pro). As ProRS can inadvertently accommodate and process non-cognate amino acids such as alanine and cysteine, to avoid such errors it has two additional distinct editing activities against alanine. One activity is designated as 'pretransfer' editing and involves the tRNA(Pro)-independent hydrolysis of activated Ala-AMP. The other activity is designated 'posttransfer' editing and involves deacylation of mischarged Ala-tRNA(Pro). The misacylated Cys-tRNA(Pro) is not edited by ProRS. The polypeptide is Proline--tRNA ligase (Pseudomonas fluorescens (strain ATCC BAA-477 / NRRL B-23932 / Pf-5)).